Reading from the N-terminus, the 201-residue chain is Fas apoptotic inhibitory molecule 1 (201 aa).

This sequence belongs to the FAIM1 family.

It is found in the cytoplasm. In terms of biological role, plays a role as an inducible effector molecule that mediates Fas resistance produced by surface Ig engagement in B cells. The polypeptide is Fas apoptotic inhibitory molecule 1 (FAIM) (Bos taurus (Bovine)).